Here is a 414-residue protein sequence, read N- to C-terminus: Putative nickel insertion protein (414 aa).

Residues 70-91 form a disordered region; it reads ATHHDHDHSQDQTHHHHADHAP.

This sequence belongs to the LarC family.

The protein is Putative nickel insertion protein of Picosynechococcus sp. (strain ATCC 27264 / PCC 7002 / PR-6) (Agmenellum quadruplicatum).